The primary structure comprises 413 residues: Putative F-box protein At3g17560 (413 aa).

The F-box domain occupies T9–H55.

This Arabidopsis thaliana (Mouse-ear cress) protein is Putative F-box protein At3g17560.